Reading from the N-terminus, the 127-residue chain is UPF0325 protein VIBHAR_03240 (127 aa).

The protein belongs to the UPF0325 family.

The protein is UPF0325 protein VIBHAR_03240 of Vibrio campbellii (strain ATCC BAA-1116).